The chain runs to 381 residues: uncharacterized protein (381 aa).

Disordered regions lie at residues 1 to 20 and 36 to 381; these read MPYY…FDPT and IPPS…EDDE. The segment covering 9-18 has biased composition (acidic residues); it reads NDVDDFDEFD. 2 stretches are compositionally biased toward basic and acidic residues: residues 166-175 and 186-237; these read TEVEYGRRPE and SESE…EGYR. Ser339, Ser346, and Ser357 each carry phosphoserine. Basic residues predominate over residues 364–374; it reads KKHRHKHHHQK.

This is an uncharacterized protein from Arabidopsis thaliana (Mouse-ear cress).